A 427-amino-acid chain; its full sequence is Serine hydroxymethyltransferase (427 aa).

(6S)-5,6,7,8-tetrahydrofolate contacts are provided by residues leucine 117 and 121-123; that span reads GHL. At lysine 226 the chain carries N6-(pyridoxal phosphate)lysine.

This sequence belongs to the SHMT family. Homodimer. Requires pyridoxal 5'-phosphate as cofactor.

Its subcellular location is the cytoplasm. The catalysed reaction is (6R)-5,10-methylene-5,6,7,8-tetrahydrofolate + glycine + H2O = (6S)-5,6,7,8-tetrahydrofolate + L-serine. The enzyme catalyses L-threonine = acetaldehyde + glycine. It carries out the reaction L-allo-threonine = acetaldehyde + glycine. Its pathway is one-carbon metabolism; tetrahydrofolate interconversion. The protein operates within amino-acid biosynthesis; glycine biosynthesis; glycine from L-serine: step 1/1. Its function is as follows. Its primary function is to catalyze the reversible interconversion of serine and glycine with tetrahydrofolate (THF) serving as the one-carbon carrier. This reaction serves as the major source of one-carbon groups required for the biosynthesis of purines, thymidylate, methionine, and other important biomolecules. Also exhibits THF-independent aldolase activity toward beta-hydroxyamino acids, producing glycine and aldehydes, via a retro-aldol mechanism. Thus, is able to catalyze the cleavage of L-threonine, L-allo-threonine, L-threo-beta-phenylserine and L-erythro-beta-phenylserine. This second activity is likely to be physiological in H.thermophilus, which is an organism that lacks the ortholog gene for the 'real' threonine aldolase characterized in mesophilic bacteria (LtaE), yeast and plants. The sequence is that of Serine hydroxymethyltransferase from Hydrogenobacter thermophilus (strain DSM 6534 / IAM 12695 / TK-6).